The following is a 130-amino-acid chain: Small ribosomal subunit protein uS9 (130 aa).

The disordered stretch occupies residues 106 to 130 (RDSRKVERKKPGLKKARKASQFSKR). Over residues 111-130 (VERKKPGLKKARKASQFSKR) the composition is skewed to basic residues.

It belongs to the universal ribosomal protein uS9 family.

The protein is Small ribosomal subunit protein uS9 of Streptococcus pneumoniae serotype 2 (strain D39 / NCTC 7466).